We begin with the raw amino-acid sequence, 168 residues long: Plastocyanin, chloroplastic (168 aa).

Residues 1 to 69 constitute a chloroplast transit peptide; it reads MATVTSTTVA…SAVLASNALA (69 aa). The Plastocyanin-like domain maps to 70–168; it reads VEVLLGASDG…AGMVGQVTVN (99 aa). Residues His-106, Cys-153, His-156, and Met-161 each contribute to the Cu cation site.

The protein belongs to the plastocyanin family. The cofactor is Cu(2+).

The protein localises to the plastid. Its subcellular location is the chloroplast thylakoid membrane. Participates in electron transfer between P700 and the cytochrome b6-f complex in photosystem I. This Pisum sativum (Garden pea) protein is Plastocyanin, chloroplastic (PETE).